A 309-amino-acid chain; its full sequence is Glutaminase (309 aa).

Substrate contacts are provided by Ser64, Asn114, Glu160, Asn167, Tyr191, Tyr243, and Val261.

The protein belongs to the glutaminase family. In terms of assembly, homotetramer.

The enzyme catalyses L-glutamine + H2O = L-glutamate + NH4(+). The sequence is that of Glutaminase from Methylobacterium sp. (strain 4-46).